Consider the following 400-residue polypeptide: Lysophospholipid transporter LplT (400 aa).

The next 12 membrane-spanning stretches (helical) occupy residues Val19 to Ala39, Val53 to Ala73, Ala91 to Ile111, Leu139 to Ala159, Ile164 to Ile184, Ser195 to Trp213, Leu227 to Leu247, Tyr257 to Val277, Thr281 to Leu301, Ala304 to Val324, Asn352 to Ala372, and Val373 to Trp393.

The protein belongs to the major facilitator superfamily. LplT (TC 2.A.1.42) family.

It localises to the cell inner membrane. In terms of biological role, catalyzes the facilitated diffusion of 2-acyl-glycero-3-phosphoethanolamine (2-acyl-GPE) into the cell. This is Lysophospholipid transporter LplT from Salmonella heidelberg (strain SL476).